The following is a 262-amino-acid chain: tRNA pseudouridine synthase A (262 aa).

The Nucleophile role is filled by D51. Y109 is a binding site for substrate.

It belongs to the tRNA pseudouridine synthase TruA family. Homodimer.

The catalysed reaction is uridine(38/39/40) in tRNA = pseudouridine(38/39/40) in tRNA. Functionally, formation of pseudouridine at positions 38, 39 and 40 in the anticodon stem and loop of transfer RNAs. This is tRNA pseudouridine synthase A from Legionella pneumophila (strain Paris).